A 505-amino-acid chain; its full sequence is Glutamate--tRNA ligase (505 aa).

The 'HIGH' region motif lies at 12-22 (PSPTGDPHVGT). Positions 253–257 (KLSKR) match the 'KMSKS' region motif. ATP is bound at residue K256.

This sequence belongs to the class-I aminoacyl-tRNA synthetase family. Glutamate--tRNA ligase type 1 subfamily. Monomer.

It is found in the cytoplasm. The enzyme catalyses tRNA(Glu) + L-glutamate + ATP = L-glutamyl-tRNA(Glu) + AMP + diphosphate. Functionally, catalyzes the attachment of glutamate to tRNA(Glu) in a two-step reaction: glutamate is first activated by ATP to form Glu-AMP and then transferred to the acceptor end of tRNA(Glu). The sequence is that of Glutamate--tRNA ligase from Chlamydia caviae (strain ATCC VR-813 / DSM 19441 / 03DC25 / GPIC) (Chlamydophila caviae).